The chain runs to 480 residues: Sestrin-2 (480 aa).

An N-acetylmethionine modification is found at M1. The interval 20-45 is disordered; sequence PGGVGDSGPGEEQRESRARRGPRGPS. The tract at residues 66–239 is N-terminal domain; mediates the alkylhydroperoxide reductase activity; the sequence is GLEALMSSGR…APTPPSEQSS (174 aa). Catalysis depends on C125, which acts as the Cysteine sulfenic acid (-SOH) intermediate. Residue K175 forms a Glycyl lysine isopeptide (Lys-Gly) (interchain with G-Cter in ubiquitin) linkage. Disordered stretches follow at residues 222–252 and 272–291; these read ADGS…SGGF and LLRD…ELEK. S249 carries the phosphoserine modification. The interval 308-480 is C-terminal domain; mediates TORC1 regulation; sequence PHPDMLCFVE…ALRAITRYMT (173 aa). L-leucine contacts are provided by residues 374 to 377, T386, and E451; that span reads TYNT.

The protein belongs to the sestrin family. In terms of assembly, interacts with the GATOR2 complex which is composed of MIOS, SEC13, SEH1L, WDR24 and WDR59; the interaction is negatively regulated by leucine. Conveys leucine availability via direct interaction with SEH1L and WDR24 components of the GATOR2 complex. Interacts with RRAGA, RRAGB, RRAGC and RRAGD; may function as a guanine nucleotide dissociation inhibitor for RRAGs and regulate them. May interact with the TORC2 complex. Interacts with KEAP1, RBX1, SQSTM and ULK1; to regulate the degradation of KEAP1. May also associate with the complex composed of TSC1, TSC2 and the AMP-responsive protein kinase/AMPK to regulate TORC1 signaling. May interact with PRDX1. Phosphorylated by ULK1 at multiple sites. Post-translationally, ubiquitinated at Lys-175 by RNF167 via 'Lys-63'-linked polyubiquitination in response to leucine deprivation: ubiquitination promotes SESN2-interaction with the GATOR2 complex, leading to inhibit the TORC1 signaling pathway. Deubiquitinated at Lys-175 by STAMBPL1, promoting the TORC1 signaling pathway. Ubiquitinated by RNF186; ubiquitination mediates proteasomal degradation. As to expression, widely expressed.

It localises to the cytoplasm. It carries out the reaction a hydroperoxide + L-cysteinyl-[protein] = S-hydroxy-L-cysteinyl-[protein] + an alcohol. Functionally, functions as an intracellular leucine sensor that negatively regulates the mTORC1 signaling pathway through the GATOR complex. In absence of leucine, binds the GATOR subcomplex GATOR2 and prevents mTORC1 signaling. Binding of leucine to SESN2 disrupts its interaction with GATOR2 thereby activating the TORC1 signaling pathway. This stress-inducible metabolic regulator also plays a role in protection against oxidative and genotoxic stresses. May negatively regulate protein translation in response to endoplasmic reticulum stress, via mTORC1. May positively regulate the transcription by NFE2L2 of genes involved in the response to oxidative stress by facilitating the SQSTM1-mediated autophagic degradation of KEAP1. May also mediate TP53 inhibition of TORC1 signaling upon genotoxic stress. Moreover, may prevent the accumulation of reactive oxygen species (ROS) through the alkylhydroperoxide reductase activity born by the N-terminal domain of the protein. Was originally reported to contribute to oxidative stress resistance by reducing PRDX1. However, this could not be confirmed. This is Sestrin-2 from Homo sapiens (Human).